A 289-amino-acid polypeptide reads, in one-letter code: uncharacterized protein (289 aa).

Residues 1 to 20 (MNPMDRQTEGQEPQHQDRQP) are compositionally biased toward basic and acidic residues. The disordered stretch occupies residues 1-39 (MNPMDRQTEGQEPQHQDRQPGIESKMNPLPLSEDEDYRG). NADP(+) is bound at residue 49–73 (IITGGDSGIGRAAAIAFAKEGADIS). Ser-181 serves as a coordination point for substrate. Tyr-194 acts as the Proton acceptor in catalysis.

Belongs to the short-chain dehydrogenases/reductases (SDR) family.

This is an uncharacterized protein from Bacillus subtilis (strain 168).